The sequence spans 251 residues: uncharacterized protein (251 aa).

This is an uncharacterized protein from Methanothermus fervidus.